Consider the following 250-residue polypeptide: NADH-quinone oxidoreductase subunit C (250 aa).

Belongs to the complex I 30 kDa subunit family. As to quaternary structure, NDH-1 is composed of 14 different subunits. Subunits NuoB, C, D, E, F, and G constitute the peripheral sector of the complex.

Its subcellular location is the cell inner membrane. It catalyses the reaction a quinone + NADH + 5 H(+)(in) = a quinol + NAD(+) + 4 H(+)(out). NDH-1 shuttles electrons from NADH, via FMN and iron-sulfur (Fe-S) centers, to quinones in the respiratory chain. The immediate electron acceptor for the enzyme in this species is believed to be ubiquinone. Couples the redox reaction to proton translocation (for every two electrons transferred, four hydrogen ions are translocated across the cytoplasmic membrane), and thus conserves the redox energy in a proton gradient. This Xanthomonas euvesicatoria pv. vesicatoria (strain 85-10) (Xanthomonas campestris pv. vesicatoria) protein is NADH-quinone oxidoreductase subunit C.